The following is a 425-amino-acid chain: Transmembrane protein 184A (425 aa).

7 consecutive transmembrane segments (helical) span residues 51–71 (LFLT…TALL), 96–116 (LLFI…LLGG), 133–153 (FVIY…SAIM), 189–209 (TLQF…LQAF), 226–246 (VTLV…LFYF), 261–281 (FLTI…LAIL), and 303–323 (LAAG…SLAL). Residues 375 to 425 (QYTQQSTHEAPGPGQGGHPAPSTHPGPASGSGGGKKSRNIEKRMLIPSEDL) are disordered. A compositionally biased stretch (low complexity) spans 392–402 (HPAPSTHPGPA).

The protein belongs to the TMEM184 family. Expressed in testis, pancreas, parotid salivary gland and mammary gland (at protein level).

The protein localises to the cell membrane. The protein resides in the cytoplasm. It is found in the perinuclear region. It localises to the cytoplasmic vesicle membrane. Its subcellular location is the early endosome membrane. The protein localises to the endosome. The protein resides in the cytoplasmic vesicle. It is found in the secretory vesicle membrane. Acts as a heparin receptor in vascular cells. May be involved in vesicle transport in exocrine cells and Sertoli cells. This Mus musculus (Mouse) protein is Transmembrane protein 184A (Tmem184a).